We begin with the raw amino-acid sequence, 101 residues long: Small ribosomal subunit protein uS14 (101 aa).

The protein belongs to the universal ribosomal protein uS14 family. Part of the 30S ribosomal subunit. Contacts proteins S3 and S10.

Binds 16S rRNA, required for the assembly of 30S particles and may also be responsible for determining the conformation of the 16S rRNA at the A site. The sequence is that of Small ribosomal subunit protein uS14 from Aliivibrio fischeri (strain MJ11) (Vibrio fischeri).